A 342-amino-acid polypeptide reads, in one-letter code: Holliday junction branch migration complex subunit RuvB (342 aa).

The tract at residues 1-179 (MTSILSPEKS…FGIPMRLNFY (179 aa)) is large ATPase domain (RuvB-L). Residues Leu-18, Arg-19, Gly-60, Lys-63, Thr-64, Thr-65, 126-128 (EDF), Arg-169, Tyr-179, and Arg-216 each bind ATP. Thr-64 provides a ligand contact to Mg(2+). The small ATPAse domain (RuvB-S) stretch occupies residues 180 to 250 (NTEELKKVLN…IANFGLNRLE (71 aa)). A head domain (RuvB-H) region spans residues 253-342 (IIGLDSNDYR…HQFNIFNDNE (90 aa)). Residues Arg-289, Arg-308, and Arg-313 each contribute to the DNA site.

This sequence belongs to the RuvB family. In terms of assembly, homohexamer. Forms an RuvA(8)-RuvB(12)-Holliday junction (HJ) complex. HJ DNA is sandwiched between 2 RuvA tetramers; dsDNA enters through RuvA and exits via RuvB. An RuvB hexamer assembles on each DNA strand where it exits the tetramer. Each RuvB hexamer is contacted by two RuvA subunits (via domain III) on 2 adjacent RuvB subunits; this complex drives branch migration. In the full resolvosome a probable DNA-RuvA(4)-RuvB(12)-RuvC(2) complex forms which resolves the HJ.

It is found in the cytoplasm. It catalyses the reaction ATP + H2O = ADP + phosphate + H(+). In terms of biological role, the RuvA-RuvB-RuvC complex processes Holliday junction (HJ) DNA during genetic recombination and DNA repair, while the RuvA-RuvB complex plays an important role in the rescue of blocked DNA replication forks via replication fork reversal (RFR). RuvA specifically binds to HJ cruciform DNA, conferring on it an open structure. The RuvB hexamer acts as an ATP-dependent pump, pulling dsDNA into and through the RuvAB complex. RuvB forms 2 homohexamers on either side of HJ DNA bound by 1 or 2 RuvA tetramers; 4 subunits per hexamer contact DNA at a time. Coordinated motions by a converter formed by DNA-disengaged RuvB subunits stimulates ATP hydrolysis and nucleotide exchange. Immobilization of the converter enables RuvB to convert the ATP-contained energy into a lever motion, pulling 2 nucleotides of DNA out of the RuvA tetramer per ATP hydrolyzed, thus driving DNA branch migration. The RuvB motors rotate together with the DNA substrate, which together with the progressing nucleotide cycle form the mechanistic basis for DNA recombination by continuous HJ branch migration. Branch migration allows RuvC to scan DNA until it finds its consensus sequence, where it cleaves and resolves cruciform DNA. The sequence is that of Holliday junction branch migration complex subunit RuvB from Rickettsia bellii (strain RML369-C).